Here is a 481-residue protein sequence, read N- to C-terminus: Aspartyl/glutamyl-tRNA(Asn/Gln) amidotransferase subunit B (481 aa).

Belongs to the GatB/GatE family. GatB subfamily. Heterotrimer of A, B and C subunits.

The enzyme catalyses L-glutamyl-tRNA(Gln) + L-glutamine + ATP + H2O = L-glutaminyl-tRNA(Gln) + L-glutamate + ADP + phosphate + H(+). The catalysed reaction is L-aspartyl-tRNA(Asn) + L-glutamine + ATP + H2O = L-asparaginyl-tRNA(Asn) + L-glutamate + ADP + phosphate + 2 H(+). In terms of biological role, allows the formation of correctly charged Asn-tRNA(Asn) or Gln-tRNA(Gln) through the transamidation of misacylated Asp-tRNA(Asn) or Glu-tRNA(Gln) in organisms which lack either or both of asparaginyl-tRNA or glutaminyl-tRNA synthetases. The reaction takes place in the presence of glutamine and ATP through an activated phospho-Asp-tRNA(Asn) or phospho-Glu-tRNA(Gln). This Pseudomonas fluorescens (strain SBW25) protein is Aspartyl/glutamyl-tRNA(Asn/Gln) amidotransferase subunit B.